The primary structure comprises 209 residues: Molybdenum cofactor guanylyltransferase (209 aa).

GTP-binding positions include 13-15, K26, N54, D74, and D104; that span reads LAG. Residue D104 participates in Mg(2+) binding.

The protein belongs to the MobA family. In terms of assembly, monomer. Requires Mg(2+) as cofactor.

Its subcellular location is the cytoplasm. It catalyses the reaction Mo-molybdopterin + GTP + H(+) = Mo-molybdopterin guanine dinucleotide + diphosphate. Its function is as follows. Transfers a GMP moiety from GTP to Mo-molybdopterin (Mo-MPT) cofactor (Moco or molybdenum cofactor) to form Mo-molybdopterin guanine dinucleotide (Mo-MGD) cofactor. This Acinetobacter baumannii (strain ATCC 17978 / DSM 105126 / CIP 53.77 / LMG 1025 / NCDC KC755 / 5377) protein is Molybdenum cofactor guanylyltransferase.